Consider the following 245-residue polypeptide: Phosducin (245 aa).

The tract at residues 1-67 is disordered; sequence MEEARRQSLE…SRDDKDSKER (67 aa). Residues 1–241 form the Phosducin domain; sequence MEEARRQSLE…IHALEQTSME (241 aa). The segment covering 58–67 has biased composition (basic and acidic residues); it reads SRDDKDSKER. Serine 73 bears the Phosphoserine; by PKA mark. Residues 111 to 245 form a thioredoxin fold region; the sequence is YGFVYELETG…EQTSMEEDVE (135 aa).

The protein belongs to the phosducin family. Forms a complex with the beta and gamma subunits of the GTP-binding protein, transducin. Interacts with CRX. Post-translationally, light-induced changes in cyclic nucleotide levels modulate the phosphorylation of this protein by cAMP kinase.

It localises to the cytoplasm. Its subcellular location is the cytosol. The protein localises to the nucleus. The protein resides in the cell projection. It is found in the cilium. It localises to the photoreceptor outer segment. Its subcellular location is the photoreceptor inner segment. Its function is as follows. May participate in the regulation of visual phototransduction or in the integration of photoreceptor metabolism. Inhibits the transcriptional activation activity of the cone-rod homeobox CRX. The chain is Phosducin (PDC) from Equus caballus (Horse).